The primary structure comprises 462 residues: uncharacterized protein (462 aa).

Residues Asp12, His14, Asp48, Asn81, His179, and His202 each contribute to the a divalent metal cation site. The stretch at 258 to 291 (ESAETKAFLNEKEREAEEKLSDAVAELAQDAEVK) forms a coiled coil.

The protein belongs to the metallophosphoesterase superfamily. Requires a divalent metal cation as cofactor.

This is an uncharacterized protein from Bacillus subtilis (strain 168).